We begin with the raw amino-acid sequence, 72 residues long: DNA-directed RNA polymerase subunit omega (72 aa).

Belongs to the RNA polymerase subunit omega family. As to quaternary structure, the RNAP catalytic core consists of 2 alpha, 1 beta, 1 beta' and 1 omega subunit. When a sigma factor is associated with the core the holoenzyme is formed, which can initiate transcription.

The enzyme catalyses RNA(n) + a ribonucleoside 5'-triphosphate = RNA(n+1) + diphosphate. Its function is as follows. Promotes RNA polymerase assembly. Latches the N- and C-terminal regions of the beta' subunit thereby facilitating its interaction with the beta and alpha subunits. This chain is DNA-directed RNA polymerase subunit omega, found in Francisella tularensis subsp. holarctica (strain LVS).